A 479-amino-acid chain; its full sequence is Serralysin C (479 aa).

Residues 1–17 constitute a propeptide that is removed on maturation; it reads MGKNLSLRQDDAQHALS. His188 is a binding site for Zn(2+). Glu189 is a catalytic residue. 2 residues coordinate Zn(2+): His192 and Tyr228. Arg265, Gly267, Asp297, Gly299, Gly300, Asp302, Thr339, Glu341, Gly346, Gly348, Asp350, Asn355, Ala357, Asn359, Gly363, Gly364, Ala365, Gly366, Asp368, Gly372, Gly373, Gly375, Asp377, Gly381, Gly382, Ala383, Gly384, Asp386, Asp395, Asp402, and Asp412 together coordinate Ca(2+). 3 Hemolysin-type calcium-binding repeats span residues 344–361, 362–379, and 380–397; these read IGGS…DNIL, QGGA…ADTL, and YGGA…QDST.

Belongs to the peptidase M10B family. Ca(2+) serves as cofactor. Requires Zn(2+) as cofactor.

The protein resides in the secreted. It catalyses the reaction Preferential cleavage of bonds with hydrophobic residues in P1'.. The sequence is that of Serralysin C (prtC) from Dickeya chrysanthemi (Pectobacterium chrysanthemi).